Here is an 831-residue protein sequence, read N- to C-terminus: Prolactin receptor (831 aa).

The signal sequence occupies residues 1–23; sequence MKQDLISSVQIILFLPLTTVGLA. The Extracellular segment spans residues 24-438; sequence GQSFPGKPKI…QIPNDFRVKD (415 aa). 4 consecutive Fibronectin type-III domains span residues 30-128, 129-227, 230-331, and 332-433; these read KPKI…VQPG, SPVN…IPSG, PPEK…VQPD, and PPVN…IPND. An intrachain disulfide couples Cys-36 to Cys-46. Asn-59 is a glycosylation site (N-linked (GlcNAc...) asparagine). Cys-75 and Cys-86 are disulfide-bonded. Residues Asn-91, Asn-100, Asn-112, Asn-132, Asn-262, Asn-303, Asn-315, and Asn-335 are each glycosylated (N-linked (GlcNAc...) asparagine). The Zn(2+) site is built by Asp-414 and His-416. The WSXWS motif signature appears at 419–423; the sequence is WSEWS. The helical transmembrane segment at 439–459 threads the bilayer; it reads MIVWIVLGVLSSLICLIMSWT. Residues 460–831 lie on the Cytoplasmic side of the membrane; the sequence is MVLKGYRMIT…DPSSFMPSFK (372 aa). Positions 471-479 match the Box 1 motif motif; that stretch reads MLPPVPGPK. Disordered regions lie at residues 527–563, 774–796, and 808–831; these read QQLMPSHDNGHPSKNAKITRKETDSDSGRGSCDSPSL, RVPHTPASQEPAKETSQSLQQGQ, and PSDCKRETGGSEYMDPSSFMPSFK. Over residues 787–796 the composition is skewed to polar residues; that stretch reads ETSQSLQQGQ.

Belongs to the type I cytokine receptor family. Type 1 subfamily.

It is found in the membrane. This is a receptor for the anterior pituitary hormone prolactin. In Gallus gallus (Chicken), this protein is Prolactin receptor (PRLR).